A 944-amino-acid chain; its full sequence is Isoleucine--tRNA ligase (944 aa).

The 'HIGH' region motif lies at 58 to 68; that stretch reads PYANGSIHIGH. L-isoleucyl-5'-AMP is bound at residue E563. The short motif at 604 to 608 is the 'KMSKS' region element; it reads KMSKS. Residue K607 coordinates ATP. Residues C907, C910, C927, and C930 each contribute to the Zn(2+) site.

It belongs to the class-I aminoacyl-tRNA synthetase family. IleS type 1 subfamily. Monomer. It depends on Zn(2+) as a cofactor.

The protein localises to the cytoplasm. The catalysed reaction is tRNA(Ile) + L-isoleucine + ATP = L-isoleucyl-tRNA(Ile) + AMP + diphosphate. In terms of biological role, catalyzes the attachment of isoleucine to tRNA(Ile). As IleRS can inadvertently accommodate and process structurally similar amino acids such as valine, to avoid such errors it has two additional distinct tRNA(Ile)-dependent editing activities. One activity is designated as 'pretransfer' editing and involves the hydrolysis of activated Val-AMP. The other activity is designated 'posttransfer' editing and involves deacylation of mischarged Val-tRNA(Ile). This is Isoleucine--tRNA ligase from Salmonella typhimurium (strain LT2 / SGSC1412 / ATCC 700720).